The primary structure comprises 168 residues: MAADDYFSLFGLPSKFAIDAQALEEAWRLVAARVHPDRYATASAAERRVAMQWAARANEAYRLLRDPMLRARYLCESAGIDLQTESNTAMAPAFLMQQMEWREMLDDARHDERARAALGEELEQAREAMRASLAELIDTRQDYAAAGQKVREWMFIEKLAQELAAVQP.

Residues 5 to 77 (DYFSLFGLPS…MLRARYLCES (73 aa)) enclose the J domain.

The protein belongs to the HscB family. As to quaternary structure, interacts with HscA and stimulates its ATPase activity.

Its function is as follows. Co-chaperone involved in the maturation of iron-sulfur cluster-containing proteins. Seems to help targeting proteins to be folded toward HscA. The polypeptide is Co-chaperone protein HscB homolog (Bordetella avium (strain 197N)).